Here is a 312-residue protein sequence, read N- to C-terminus: Tyrosine recombinase XerC (312 aa).

The Core-binding (CB) domain maps to 1–103 (MIASIYSFLD…SIKSFAHYCV (103 aa)). The Tyr recombinase domain occupies 124-306 (ELPSPMTYAQ…SVKLKKQTHQ (183 aa)). Active-site residues include Arg-164, Lys-188, His-258, Arg-261, and His-284. Residue Tyr-293 is the O-(3'-phospho-DNA)-tyrosine intermediate of the active site.

Belongs to the 'phage' integrase family. XerC subfamily. Forms a cyclic heterotetrameric complex composed of two molecules of XerC and two molecules of XerD.

It is found in the cytoplasm. Site-specific tyrosine recombinase, which acts by catalyzing the cutting and rejoining of the recombining DNA molecules. The XerC-XerD complex is essential to convert dimers of the bacterial chromosome into monomers to permit their segregation at cell division. It also contributes to the segregational stability of plasmids. The sequence is that of Tyrosine recombinase XerC from Chlamydia pneumoniae (Chlamydophila pneumoniae).